The following is a 284-amino-acid chain: Cell division protein FtsQ (284 aa).

The segment covering 1-10 (MAFGKSKNRR) has biased composition (basic residues). The tract at residues 1 to 23 (MAFGKSKNRRRQDAAQQKEAVRG) is disordered. Over 1-34 (MAFGKSKNRRRQDAAQQKEAVRGAVRSQGPRALK) the chain is Cytoplasmic. Residues 35 to 52 (VLGLTLGTGLLVWGGAAL) traverse the membrane as a helical segment. Topologically, residues 53–284 (REWTLTSPRF…ASERSGASMR (232 aa)) are periplasmic. A POTRA domain is found at 62-130 (FELEAVSFSG…NRVSVEVTEH (69 aa)).

This sequence belongs to the FtsQ/DivIB family. FtsQ subfamily.

It localises to the cell inner membrane. Functionally, essential cell division protein. The sequence is that of Cell division protein FtsQ from Myxococcus fulvus (strain ATCC BAA-855 / HW-1).